A 436-amino-acid polypeptide reads, in one-letter code: Probable glucose-6-phosphate isomerase (436 aa).

The active-site Proton donor is E272. Catalysis depends on residues H293 and K404.

The protein belongs to the GPI family.

It is found in the cytoplasm. The enzyme catalyses alpha-D-glucose 6-phosphate = beta-D-fructose 6-phosphate. It participates in carbohydrate biosynthesis; gluconeogenesis. Its pathway is carbohydrate degradation; glycolysis; D-glyceraldehyde 3-phosphate and glycerone phosphate from D-glucose: step 2/4. In terms of biological role, catalyzes the reversible isomerization of glucose-6-phosphate to fructose-6-phosphate. The sequence is that of Probable glucose-6-phosphate isomerase from Haloarcula marismortui (strain ATCC 43049 / DSM 3752 / JCM 8966 / VKM B-1809) (Halobacterium marismortui).